Reading from the N-terminus, the 303-residue chain is Zinc transporter ZIP9-A (303 aa).

Residues Ile-7–Ala-27 traverse the membrane as a helical segment. An N-linked (GlcNAc...) asparagine glycan is attached at Asn-29. 5 helical membrane passes run Leu-35–Ile-55, Ala-102–Gly-122, Ile-142–Ala-162, Leu-172–Phe-192, and His-206–Ser-226. Residue Asn-237 is glycosylated (N-linked (GlcNAc...) asparagine). 2 helical membrane passes run Gly-240–Pro-260 and Leu-282–Gln-302.

It belongs to the ZIP transporter (TC 2.A.5) family.

It is found in the golgi apparatus. Its subcellular location is the trans-Golgi network membrane. It localises to the cell membrane. The protein localises to the cytoplasm. The protein resides in the perinuclear region. It is found in the mitochondrion. Its subcellular location is the nucleus. The catalysed reaction is Zn(2+)(in) = Zn(2+)(out). Its function is as follows. Transports zinc ions across cell and organelle membranes into the cytoplasm and regulates intracellular zinc homeostasis. Participates in the zinc ions efflux out of the secretory compartments. Regulates intracellular zinc level, resulting in the enhancement of AKT1 and MAPK3/MAPK1 (Erk1/2) phosphorylation in response to the BCR activation. Also functions as a membrane androgen receptor that mediates, through a G protein, the non-classical androgen signaling pathway, characterized by the activation of MAPK3/MAPK1 (Erk1/2) and transcription factors CREB1 or ATF1. Moreover, has dual functions as a membrane-bound androgen receptor and as an androgen-dependent zinc transporter both of which are mediated through an inhibitory G protein (Gi) that mediates both MAP kinase and zinc signaling leading to the androgen-dependent apoptotic process. The sequence is that of Zinc transporter ZIP9-A (slc39a9-a) from Xenopus laevis (African clawed frog).